The following is a 416-amino-acid chain: uncharacterized protein (416 aa).

4 residues coordinate [4Fe-4S] cluster: Cys63, Cys75, Cys78, and Cys152. Residues Gln253, Phe280, Glu300, and Asp348 each contribute to the S-adenosyl-L-methionine site. Cys374 serves as the catalytic Nucleophile.

Belongs to the class I-like SAM-binding methyltransferase superfamily. RNA M5U methyltransferase family.

This is an uncharacterized protein from Agrobacterium fabrum (strain C58 / ATCC 33970) (Agrobacterium tumefaciens (strain C58)).